The sequence spans 256 residues: 5-keto-4-deoxy-D-glucarate aldolase (256 aa).

H50 (proton acceptor) is an active-site residue. Q151 serves as a coordination point for substrate. Residue E153 coordinates Mg(2+). S178 and D179 together coordinate substrate. D179 provides a ligand contact to Mg(2+).

It belongs to the HpcH/HpaI aldolase family. KDGluc aldolase subfamily. Homohexamer; trimer of dimers. Requires Mg(2+) as cofactor.

The catalysed reaction is 5-dehydro-4-deoxy-D-glucarate = 2-hydroxy-3-oxopropanoate + pyruvate. The enzyme catalyses 2-dehydro-3-deoxy-D-glucarate = 2-hydroxy-3-oxopropanoate + pyruvate. Its pathway is carbohydrate acid metabolism; galactarate degradation; D-glycerate from galactarate: step 2/3. Its function is as follows. Catalyzes the reversible retro-aldol cleavage of both 5-keto-4-deoxy-D-glucarate and 2-keto-3-deoxy-D-glucarate to pyruvate and tartronic semialdehyde. In Salmonella paratyphi C (strain RKS4594), this protein is 5-keto-4-deoxy-D-glucarate aldolase.